Reading from the N-terminus, the 127-residue chain is uncharacterized protein (127 aa).

An HTH asnC-type domain is found at 1–46 (MEVGLSPSACLRRIKLMEQAGVIRGYTALVDPTQSESTIAVIINIT).

Not known, symbiotically active. This is an uncharacterized protein from Sinorhizobium fredii (strain NBRC 101917 / NGR234).